The chain runs to 186 residues: Archaemetzincin (186 aa).

Histidine 136 is a Zn(2+) binding site. Glutamate 137 acts as the Proton acceptor in catalysis. Histidine 140, histidine 146, cysteine 147, cysteine 152, cysteine 171, and cysteine 174 together coordinate Zn(2+).

The protein belongs to the peptidase M54 family. Monomer. Requires Zn(2+) as cofactor.

Its function is as follows. Probable zinc metalloprotease whose natural substrate is unknown. In Thermococcus kodakarensis (strain ATCC BAA-918 / JCM 12380 / KOD1) (Pyrococcus kodakaraensis (strain KOD1)), this protein is Archaemetzincin.